We begin with the raw amino-acid sequence, 420 residues long: Mitogen-activated protein kinase HOG2 (420 aa).

ATP is bound by residues 29-37 (VGMGAFGLV) and K52. The active-site Proton acceptor is the D144. T174 is modified (phosphothreonine). The short motif at 174–176 (TGY) is the TXY element. Phosphotyrosine is present on Y176. The disordered stretch occupies residues 372-394 (AQHHHQTQQQSSGKHTNPTTSSS).

This sequence belongs to the protein kinase superfamily. Ser/Thr protein kinase family. MAP kinase subfamily. HOG1 sub-subfamily. The cofactor is Mg(2+). Post-translationally, dually phosphorylated on Thr-174 and Tyr-176, which activates the enzyme.

The protein resides in the cytoplasm. Its subcellular location is the nucleus. The enzyme catalyses L-seryl-[protein] + ATP = O-phospho-L-seryl-[protein] + ADP + H(+). The catalysed reaction is L-threonyl-[protein] + ATP = O-phospho-L-threonyl-[protein] + ADP + H(+). With respect to regulation, activated by tyrosine and threonine phosphorylation. Functionally, mitogen-activated protein kinase involved in a signal transduction pathway that is activated by changes in the osmolarity of the extracellular environment. Controls osmotic regulation of transcription of target genes. This is Mitogen-activated protein kinase HOG2 (HOG2) from Zygosaccharomyces rouxii.